The following is a 250-amino-acid chain: Histone H1.2 (250 aa).

The segment covering 1–11 (MSDSAVATSAS) has biased composition (polar residues). Disordered stretches follow at residues 1-53 (MSDS…QMVD) and 101-250 (KLIQ…ATKK). The segment covering 27–42 (KKAAATPKSKKSTAAP) has biased composition (low complexity). Positions 44–118 (SHPPTQQMVD…GASGSFKLSR (75 aa)) constitute an H15 domain. A compositionally biased stretch (basic and acidic residues) spans 120-133 (AKKDPKPKASAVEK). Low complexity predominate over residues 151-161 (STSTTKKAAGA). Basic and acidic residues predominate over residues 174–191 (KSVEKKRADKAKAKDAKK). The span at 192 to 211 (TGTIKAKPTTAKAKSSATKP) shows a compositional bias: low complexity. 2 stretches are compositionally biased toward basic residues: residues 212 to 225 (KTPK…KPKK) and 235 to 250 (TAVK…ATKK).

It belongs to the histone H1/H5 family.

It is found in the nucleus. The protein localises to the chromosome. In terms of biological role, histones H1 are necessary for the condensation of nucleosome chains into higher-order structures. In Drosophila virilis (Fruit fly), this protein is Histone H1.2 (His1.2).